An 86-amino-acid chain; its full sequence is MLLWIVATLLIFSLPVSTALDYNDFSLQRIARAPHPSSALLVPYPRVGKRSNILNNNSESQNSVQKRLYMARVGKRAFFYTPRIGK.

The N-terminal stretch at 1–19 is a signal peptide; the sequence is MLLWIVATLLIFSLPVSTA.

In terms of tissue distribution, expressed in two pairs of neurons in the anterior part of the nervous system (at protein level).

Encodes at least three neuropeptides: two of the periviscerokinin family (APHPSSALLVPYPRV-amide and LYMARV-amide) and one pyrokinin (AFFYTPRI-amide). In terms of biological role, putative ligand for neuromedin U receptor homolog nmur-2. This is Neuropeptide precursor capa-1 from Caenorhabditis elegans.